The sequence spans 312 residues: Acetyl-coenzyme A carboxylase carboxyl transferase subunit beta (312 aa).

The CoA carboxyltransferase N-terminal domain maps to 24–293 (LWIKCPDSGQ…VEHAKPAPQL (270 aa)). Residues 286–312 (HAKPAPQLPPPAKPAETAEAPAVATSA) form a disordered region. Residues 299-312 (PAETAEAPAVATSA) are compositionally biased toward low complexity.

The protein belongs to the AccD/PCCB family. Acetyl-CoA carboxylase is a heterohexamer composed of biotin carboxyl carrier protein (AccB), biotin carboxylase (AccC) and two subunits each of ACCase subunit alpha (AccA) and ACCase subunit beta (AccD).

It localises to the cytoplasm. The catalysed reaction is N(6)-carboxybiotinyl-L-lysyl-[protein] + acetyl-CoA = N(6)-biotinyl-L-lysyl-[protein] + malonyl-CoA. It functions in the pathway lipid metabolism; malonyl-CoA biosynthesis; malonyl-CoA from acetyl-CoA: step 1/1. In terms of biological role, component of the acetyl coenzyme A carboxylase (ACC) complex. Biotin carboxylase (BC) catalyzes the carboxylation of biotin on its carrier protein (BCCP) and then the CO(2) group is transferred by the transcarboxylase to acetyl-CoA to form malonyl-CoA. The sequence is that of Acetyl-coenzyme A carboxylase carboxyl transferase subunit beta from Bradyrhizobium sp. (strain ORS 278).